The following is a 133-amino-acid chain: Small ribosomal subunit protein uS9 (133 aa).

The segment at 94-133 (SADNRKPLKTEGHLSRDPRAKERRKYGLKKARKAPQFSKR) is disordered. A compositionally biased stretch (basic and acidic residues) spans 95 to 113 (ADNRKPLKTEGHLSRDPRA). Residues 114–133 (KERRKYGLKKARKAPQFSKR) show a composition bias toward basic residues.

Belongs to the universal ribosomal protein uS9 family.

This Synechococcus sp. (strain CC9605) protein is Small ribosomal subunit protein uS9.